The primary structure comprises 210 residues: Large ribosomal subunit protein uL4 (210 aa).

The interval 46 to 77 (QGTHKSKERGEIAGSTKKIKKQKGTGTARAGS) is disordered.

It belongs to the universal ribosomal protein uL4 family. As to quaternary structure, part of the 50S ribosomal subunit.

Its function is as follows. One of the primary rRNA binding proteins, this protein initially binds near the 5'-end of the 23S rRNA. It is important during the early stages of 50S assembly. It makes multiple contacts with different domains of the 23S rRNA in the assembled 50S subunit and ribosome. Functionally, forms part of the polypeptide exit tunnel. In Amoebophilus asiaticus (strain 5a2), this protein is Large ribosomal subunit protein uL4.